The following is a 598-amino-acid chain: Autophagy-related protein 22-1 (598 aa).

A disordered region spans residues 1–20 (MEDGGAGLRAPRYPAEDTSP). Residues 28–48 (GFFCYGLAAEVFAVCAVGSFL) form a helical membrane-spanning segment. N-linked (GlcNAc...) asparagine glycans are attached at residues asparagine 74 and asparagine 80. 3 consecutive transmembrane segments (helical) span residues 111-131 (SFAM…LVSV), 159-179 (FLLV…ICVV), and 182-202 (GCSF…HPVV). Positions 207-238 (DHPTASSSIPLQPISPQRSSRKSEESLHQVNR) are disordered. The segment covering 212–224 (SSSIPLQPISPQR) has biased composition (low complexity). Basic and acidic residues predominate over residues 227 to 238 (RKSEESLHQVNR). Residues 263–283 (VGIGYMAAVSVQVICILILYI) traverse the membrane as a helical segment. N-linked (GlcNAc...) asparagine glycosylation is present at asparagine 285. The next 7 membrane-spanning stretches (helical) occupy residues 297-317 (TVLF…VMWL), 363-383 (VLLF…ISAT), 400-420 (ALLS…WPII), 431-451 (IIVC…LGFL), 465-485 (WYEI…LSSY), 489-509 (FYGL…FAIT), and 534-554 (AFGF…MVDV). Residues 575–598 (HEDFESFEGSSDGHEAEGLMRDHD) are disordered. Basic and acidic residues predominate over residues 585–598 (SDGHEAEGLMRDHD).

This sequence belongs to the ATG22 family.

It is found in the vacuole membrane. In terms of biological role, vacuolar effluxer which mediate the efflux of amino acids resulting from autophagic degradation. The release of autophagic amino acids allows the maintenance of protein synthesis and viability during nitrogen starvation. In Sclerotinia sclerotiorum (strain ATCC 18683 / 1980 / Ss-1) (White mold), this protein is Autophagy-related protein 22-1 (atg22-1).